A 308-amino-acid polypeptide reads, in one-letter code: tRNA dimethylallyltransferase (308 aa).

An ATP-binding site is contributed by 14–21 (GPTASGKT). 16 to 21 (TASGKT) provides a ligand contact to substrate. Interaction with substrate tRNA regions lie at residues 39–42 (DSAL), 163–167 (QRLAR), and 244–249 (RCVGYR).

It belongs to the IPP transferase family. Monomer. It depends on Mg(2+) as a cofactor.

The enzyme catalyses adenosine(37) in tRNA + dimethylallyl diphosphate = N(6)-dimethylallyladenosine(37) in tRNA + diphosphate. In terms of biological role, catalyzes the transfer of a dimethylallyl group onto the adenine at position 37 in tRNAs that read codons beginning with uridine, leading to the formation of N6-(dimethylallyl)adenosine (i(6)A). The chain is tRNA dimethylallyltransferase from Shewanella piezotolerans (strain WP3 / JCM 13877).